We begin with the raw amino-acid sequence, 130 residues long: uncharacterized protein (130 aa).

This is an uncharacterized protein from Bacillus subtilis (strain 168).